Here is a 519-residue protein sequence, read N- to C-terminus: Mannosyl-oligosaccharide alpha-1,2-mannosidase (519 aa).

An N-terminal signal peptide occupies residues 1–22; it reads MKGSPVLAVCAAALTLIPSVVA. An N-linked (GlcNAc...) asparagine glycan is attached at Asn187. A disulfide bridge connects residues Cys337 and Cys366. Glu380 functions as the Proton donor in the catalytic mechanism. Asn443 carries N-linked (GlcNAc...) asparagine glycosylation. Residue Thr507 coordinates Ca(2+).

It belongs to the glycosyl hydrolase 47 family. As to quaternary structure, monomer. Ca(2+) is required as a cofactor. It depends on Mg(2+) as a cofactor.

The protein resides in the secreted. The catalysed reaction is N(4)-(alpha-D-Man-(1-&gt;2)-alpha-D-Man-(1-&gt;2)-alpha-D-Man-(1-&gt;3)-[alpha-D-Man-(1-&gt;2)-alpha-D-Man-(1-&gt;3)-[alpha-D-Man-(1-&gt;2)-alpha-D-Man-(1-&gt;6)]-alpha-D-Man-(1-&gt;6)]-beta-D-Man-(1-&gt;4)-beta-D-GlcNAc-(1-&gt;4)-beta-D-GlcNAc)-L-asparaginyl-[protein] (N-glucan mannose isomer 9A1,2,3B1,2,3) + 4 H2O = N(4)-(alpha-D-Man-(1-&gt;3)-[alpha-D-Man-(1-&gt;3)-[alpha-D-Man-(1-&gt;6)]-alpha-D-Man-(1-&gt;6)]-beta-D-Man-(1-&gt;4)-beta-D-GlcNAc-(1-&gt;4)-beta-D-GlcNAc)-L-asparaginyl-[protein] (N-glucan mannose isomer 5A1,2) + 4 beta-D-mannose. It catalyses the reaction N(4)-(alpha-D-Man-(1-&gt;2)-alpha-D-Man-(1-&gt;2)-alpha-D-Man-(1-&gt;3)-[alpha-D-Man-(1-&gt;3)-[alpha-D-Man-(1-&gt;2)-alpha-D-Man-(1-&gt;6)]-alpha-D-Man-(1-&gt;6)]-beta-D-Man-(1-&gt;4)-beta-D-GlcNAc-(1-&gt;4)-beta-D-GlcNAc)-L-asparaginyl-[protein] (N-glucan mannose isomer 8A1,2,3B1,3) + 3 H2O = N(4)-(alpha-D-Man-(1-&gt;3)-[alpha-D-Man-(1-&gt;3)-[alpha-D-Man-(1-&gt;6)]-alpha-D-Man-(1-&gt;6)]-beta-D-Man-(1-&gt;4)-beta-D-GlcNAc-(1-&gt;4)-beta-D-GlcNAc)-L-asparaginyl-[protein] (N-glucan mannose isomer 5A1,2) + 3 beta-D-mannose. Its pathway is protein modification; protein glycosylation. In terms of biological role, alpha-mannosidase involved in the maturation of Asn-linked oligosaccharides. Progressively trims alpha-1,2-linked mannose residues from Man(9)GlcNAc(2) to produce Man(5)GlcNAc(2). The chain is Mannosyl-oligosaccharide alpha-1,2-mannosidase from Coccidioides posadasii (strain RMSCC 757 / Silveira) (Valley fever fungus).